The chain runs to 262 residues: Phosphatidylglycerol--prolipoprotein diacylglyceryl transferase (262 aa).

The next 4 membrane-spanning stretches (helical) occupy residues 9-29 (LGPL…ILAV), 41-61 (IIPD…ILGA), 80-100 (IFAI…GALV), and 109-129 (LINT…AQSL). Arg131 is an a 1,2-diacyl-sn-glycero-3-phospho-(1'-sn-glycerol) binding site. A run of 3 helical transmembrane segments spans residues 167 to 187 (QPTF…ILIF), 197 to 217 (GHIT…IEGM), and 226 to 246 (GLRV…MIVI).

It belongs to the Lgt family.

The protein localises to the cell membrane. It carries out the reaction L-cysteinyl-[prolipoprotein] + a 1,2-diacyl-sn-glycero-3-phospho-(1'-sn-glycerol) = an S-1,2-diacyl-sn-glyceryl-L-cysteinyl-[prolipoprotein] + sn-glycerol 1-phosphate + H(+). Its pathway is protein modification; lipoprotein biosynthesis (diacylglyceryl transfer). In terms of biological role, catalyzes the transfer of the diacylglyceryl group from phosphatidylglycerol to the sulfhydryl group of the N-terminal cysteine of a prolipoprotein, the first step in the formation of mature lipoproteins. This Streptococcus pneumoniae (strain Taiwan19F-14) protein is Phosphatidylglycerol--prolipoprotein diacylglyceryl transferase.